A 368-amino-acid polypeptide reads, in one-letter code: S-adenosylmethionine decarboxylase proenzyme 1 (368 aa).

Catalysis depends on residues Glu-9 and Arg-12. Residue Ser-69 is the Schiff-base intermediate with substrate; via pyruvic acid of the active site. Ser-69 is subject to Pyruvic acid (Ser); by autocatalysis. Cys-83 serves as the catalytic Proton donor; for catalytic activity. Residues Ser-234 and His-247 each act as proton acceptor; for processing activity in the active site.

This sequence belongs to the eukaryotic AdoMetDC family. Requires pyruvate as cofactor. In terms of processing, is synthesized initially as an inactive proenzyme. Formation of the active enzyme involves a self-maturation process in which the active site pyruvoyl group is generated from an internal serine residue via an autocatalytic post-translational modification. Two non-identical subunits are generated from the proenzyme in this reaction, and the pyruvate is formed at the N-terminus of the alpha chain, which is derived from the carboxyl end of the proenzyme. The post-translation cleavage follows an unusual pathway, termed non-hydrolytic serinolysis, in which the side chain hydroxyl group of the serine supplies its oxygen atom to form the C-terminus of the beta chain, while the remainder of the serine residue undergoes an oxidative deamination to produce ammonia and the pyruvoyl group blocking the N-terminus of the alpha chain.

The catalysed reaction is S-adenosyl-L-methionine + H(+) = S-adenosyl 3-(methylsulfanyl)propylamine + CO2. It functions in the pathway amine and polyamine biosynthesis; S-adenosylmethioninamine biosynthesis; S-adenosylmethioninamine from S-adenosyl-L-methionine: step 1/1. In Brassica juncea (Indian mustard), this protein is S-adenosylmethionine decarboxylase proenzyme 1 (SAMDC1).